The chain runs to 466 residues: MVMEKPSPLLVGREFVRQYYTLLNQAPDMLHRFYGKNSSYVHGGLDSNGKPADAVYGQKEIHRKVMSQNFTNCHTKIRHVDAHATLNDGVVVQVMGLLSNNNQALRRFMQTFVLAPEGSVANKFYVHNDIFRYQDEVFGGFVTEPQEESEEEVEEPEERQQTPEVVPDDSGTFYDQAVVSNDMEEHLEEPVAEPEPDPEPEPEQEPVSEIQEEKPEPVLEETAPEDAQKSSSPAPADIAQTVQEDLRTFSWASVTSKNLPPSGAVPVTGIPPHVVKVPASQPRPESKPESQIPPQRPQRDQRVREQRINIPPQRGPRPIREAGEQGDIEPRRMVRHPDSHQLFIGNLPHEVDKSELKDFFQSYGNVVELRINSGGKLPNFGFVVFDDSEPVQKVLSNRPIMFRGEVRLNVEEKKTRAAREGDRRDNRLRGPGGPRGGLGGGMRGPPRGGMVQKPGFGVGRGLAPRQ.

The 123-residue stretch at 11–133 (VGREFVRQYY…FYVHNDIFRY (123 aa)) folds into the NTF2 domain. Residues K36, K50, K59, K64, K76, and K123 each participate in a glycyl lysine isopeptide (Lys-Gly) (interchain with G-Cter in ubiquitin) cross-link. The tract at residues 142 to 225 (VTEPQEESEE…EPVLEETAPE (84 aa)) is acidic disordered region. A Phosphothreonine modification is found at T143. Disordered regions lie at residues 144-172 (EPQE…DSGT) and 184-243 (EEHL…QTVQ). Acidic residues-rich tracts occupy residues 145–157 (PQEE…EEPE) and 185–206 (EHLE…EQEP). The residue at position 149 (S149) is a Phosphoserine. Phosphoserine occurs at positions 231, 232, 250, and 253. Residues 255–329 (TSKNLPPSGA…REAGEQGDIE (75 aa)) form a disordered region. 2 stretches are compositionally biased toward basic and acidic residues: residues 297 to 307 (PQRDQRVREQR) and 318 to 329 (PIREAGEQGDIE). Residues 340-415 (HQLFIGNLPH…VRLNVEEKKT (76 aa)) enclose the RRM domain. Glycyl lysine isopeptide (Lys-Gly) (interchain with G-Cter in ubiquitin) cross-links involve residues K353 and K357. S373 bears the Phosphoserine mark. Residue K376 forms a Glycyl lysine isopeptide (Lys-Gly) (interchain with G-Cter in ubiquitin) linkage. Residue K376 is modified to N6-acetyllysine; alternate. K376 participates in a covalent cross-link: Glycyl lysine isopeptide (Lys-Gly) (interchain with G-Cter in SUMO2); alternate. Residue K393 forms a Glycyl lysine isopeptide (Lys-Gly) (interchain with G-Cter in ubiquitin); alternate linkage. Positions 410–466 (VEEKKTRAAREGDRRDNRLRGPGGPRGGLGGGMRGPPRGGMVQKPGFGVGRGLAPRQ) are RG-rich region. Over residues 413 to 428 (KKTRAAREGDRRDNRL) the composition is skewed to basic and acidic residues. The segment at 413 to 466 (KKTRAAREGDRRDNRLRGPGGPRGGLGGGMRGPPRGGMVQKPGFGVGRGLAPRQ) is disordered. An Asymmetric dimethylarginine modification is found at R429. The segment covering 430 to 447 (GPGGPRGGLGGGMRGPPR) has biased composition (gly residues). R435 is subject to Asymmetric dimethylarginine; alternate. Dimethylated arginine; alternate is present on R435. R435 is subject to Omega-N-methylarginine; alternate. Omega-N-methylarginine is present on R447. Dimethylated arginine; alternate is present on R460. The residue at position 460 (R460) is an Omega-N-methylarginine; alternate. At R465 the chain carries Omega-N-methylarginine.

As to quaternary structure, homodimer and oligomer. Component of a TAU mRNP complex, at least composed of IGF2BP1, ELAVL4 and G3BP1. Binds to the SH3 domain of Ras GTPase-activating protein (RASA1) in proliferating cells. No interaction in quiescent cells. Interacts (via NTF2 domain) with USP10; inhibiting stress granule formation by lowering G3BP1 valence. Interacts (via NTF2 domain) with CAPRIN1; promoting stress granule formation by lowering the saturation-concentration of G3BP1. Interacts (via NTF2 domain) with UBAP2L; promoting stress granule formation. Associates (via RG-rich region) with 40S ribosome subunits. Interacts with RPTOR and SPAG5; this complex is increased by oxidative stress. Interacts with ATXN2L. Interacts with STYXL1. Interacts with CGAS (via N-terminus); this interaction promotes the DNA-binding and activation of CGAS. Interacts (via C-terminus) with RIGI. Interacts with PABPC1. Interacts with QKI (isoforms QKI6 and QKI7); directing N(7)-methylguanine-containing mRNAs to stress granules. (Microbial infection) Interacts with Semliki forest virus non-structural protein 3 (via C-terminus); this interaction inhibits the formation of stress granules on viral mRNAs and the nsp3-G3BP1 complexes bind viral RNAs and probably orchestrate the assembly of viral replication complexes. In terms of assembly, (Microbial infection) Interacts with Chikungunya virus non-structural protein 3 (via C-terminus); this interaction inhibits the formation of stress granules on viral mRNAs and the nsp3-G3BP1 complexes bind viral RNAs and probably orchestrate the assembly of viral replication complexes. As to quaternary structure, (Microbial infection) Interacts with Sindbis virus non-structural protein 3 (via C-terminus); this interaction inhibits the formation of stress granules on viral mRNAs and the nsp3-G3BP1 complexes bind viral RNAs and probably orchestrate the assembly of viral replication complexes. (Microbial infection) Interacts with Zika virus capsid protein C; this interaction is probably linked to the inhibition of stress granules formation by the virus. In terms of assembly, (Microbial infection) Interacts with reovirus type 2 protein sigma-NS; this interaction induces the relocalization of G3BP1 to the outer periphery of sigma-NS/mu-Ns viral factories and is probably involved in the suppression of the integrated stress response by the virus. As to quaternary structure, (Microbial infection) Interacts with SARS-CoV-2 N protein; the interaction is enhanced by host HDAC6 which deacetylates the viral N protein and promotes N protein association with G3BP1, disrupting stress granule formation and facilitating viral replication. Interacts with HDAC6; the interaction increases during SARS-CoV-2 infection. Requires Mg(2+) as cofactor. Post-translationally, phosphorylation of the acidic disordered region regulates stress granule assembly. RASA1-dependent phosphorylation of Ser-149 induces a conformational change that prevents self-association. Dephosphorylation after HRAS activation is required for stress granule assembly. Ser-149 phosphorylation induces partial nuclear localization. Ubiquitinated by TRIM21 via 'Lys-63'-linked polyubiquitination in the NTF2 domain in response to heat shock, leading to stress granule disassembly: ubiquitination promotes interaction with the FAF2 adapter, followed by interaction with VCP, which extracts G3BP1 from stress granules, leading to stress granule disassembly. In case of prolonged stress, ubiquitination by TRIM21 leads to autophagy-dependent degradation of G3BP1 via recruitment of ubiquitinated G3BP1 by SQSTM1 and/or CALCOCO2 to autophagosomes. In terms of processing, (Microbial infection) Cleaved by human enterovirus 71; this cleavage induces the disassembly of cytoplasmic stress granules. Cleaved by Foot-and-mouth disease virus; this cleavage suppresses the formation of cytoplasmic stress granules. Post-translationally, arg-435 is dimethylated, probably to asymmetric dimethylarginine. (Microbial infection) Cleaved by Encephalomyocarditis virus protease 3C; this cleavage suppresses the formation of cytoplasmic stress granules. In terms of tissue distribution, ubiquitous.

The protein localises to the cytoplasm. It localises to the cytosol. The protein resides in the perikaryon. It is found in the stress granule. Its subcellular location is the nucleus. It carries out the reaction ATP + H2O = ADP + phosphate + H(+). Its activity is regulated as follows. Under physiological conditions, G3BP1 adopts a compact state that is stabilized by intramolecular interactions between the RG-rich and the acidic regions that inhibit phase separation. Upon stress, polysomes disassemble and mRNAs are released in an unfolded protein-free state. Binding of unfolded mRNA to G3BP1 outcompetes the intramolecular interactions and RNA-bound G3BP1 adopts an expanded conformation in which the RG-rich region becomes exposed to engage in protein-protein and protein-RNA interactions, allowing physical cross-linking of RNA molecules to form protein-RNA condensates, leading to liquid-liquid phase separation (LLPS). Functionally, protein involved in various processes, such as stress granule formation and innate immunity. Plays an essential role in stress granule formation. Stress granules are membraneless compartments that store mRNAs and proteins, such as stalled translation pre-initiation complexes, in response to stress. Promotes formation of stress granules phase-separated membraneless compartment by undergoing liquid-liquid phase separation (LLPS) upon unfolded RNA-binding: functions as a molecular switch that triggers RNA-dependent LLPS in response to a rise in intracellular free RNA concentrations. Also acts as an ATP- and magnesium-dependent helicase: unwinds DNA/DNA, RNA/DNA, and RNA/RNA substrates with comparable efficiency. Acts unidirectionally by moving in the 5' to 3' direction along the bound single-stranded DNA. Unwinds preferentially partial DNA and RNA duplexes having a 17 bp annealed portion and either a hanging 3' tail or hanging tails at both 5'- and 3'-ends. Plays an essential role in innate immunity by promoting CGAS and RIGI activity. Participates in the DNA-triggered cGAS/STING pathway by promoting the DNA binding and activation of CGAS. Triggers the condensation of cGAS, a process probably linked to the formation of membrane-less organelles. Also enhances RIGI-induced type I interferon production probably by helping RIGI at sensing pathogenic RNA. May also act as a phosphorylation-dependent sequence-specific endoribonuclease in vitro: Cleaves exclusively between cytosine and adenine and cleaves MYC mRNA preferentially at the 3'-UTR. The sequence is that of Ras GTPase-activating protein-binding protein 1 from Homo sapiens (Human).